The primary structure comprises 140 residues: Putative nickel-responsive regulator (140 aa).

Residues H81, H92, H94, and C100 each contribute to the Ni(2+) site.

This sequence belongs to the transcriptional regulatory CopG/NikR family. Ni(2+) serves as cofactor.

In terms of biological role, transcriptional regulator. The protein is Putative nickel-responsive regulator of Methanocella arvoryzae (strain DSM 22066 / NBRC 105507 / MRE50).